We begin with the raw amino-acid sequence, 309 residues long: tRNA pseudouridine synthase B (309 aa).

The Nucleophile role is filled by aspartate 39.

The protein belongs to the pseudouridine synthase TruB family. Type 1 subfamily.

The catalysed reaction is uridine(55) in tRNA = pseudouridine(55) in tRNA. In terms of biological role, responsible for synthesis of pseudouridine from uracil-55 in the psi GC loop of transfer RNAs. The sequence is that of tRNA pseudouridine synthase B from Bacillus velezensis (strain DSM 23117 / BGSC 10A6 / LMG 26770 / FZB42) (Bacillus amyloliquefaciens subsp. plantarum).